The sequence spans 550 residues: Arginine--tRNA ligase (550 aa).

Positions 130-140 match the 'HIGH' region motif; that stretch reads ANPTGPIHLGG.

The protein belongs to the class-I aminoacyl-tRNA synthetase family. In terms of assembly, monomer.

It localises to the cytoplasm. It carries out the reaction tRNA(Arg) + L-arginine + ATP = L-arginyl-tRNA(Arg) + AMP + diphosphate. This is Arginine--tRNA ligase from Rhodococcus erythropolis (strain PR4 / NBRC 100887).